Here is a 216-residue protein sequence, read N- to C-terminus: ATP-dependent Clp protease proteolytic subunit (216 aa).

Catalysis depends on S103, which acts as the Nucleophile. The active site involves H128. The tract at residues 197–216 is disordered; the sequence is RRPALPGDDAPRDVSEGPTP.

Belongs to the peptidase S14 family. As to quaternary structure, fourteen ClpP subunits assemble into 2 heptameric rings which stack back to back to give a disk-like structure with a central cavity, resembling the structure of eukaryotic proteasomes.

It localises to the cytoplasm. The catalysed reaction is Hydrolysis of proteins to small peptides in the presence of ATP and magnesium. alpha-casein is the usual test substrate. In the absence of ATP, only oligopeptides shorter than five residues are hydrolyzed (such as succinyl-Leu-Tyr-|-NHMec, and Leu-Tyr-Leu-|-Tyr-Trp, in which cleavage of the -Tyr-|-Leu- and -Tyr-|-Trp bonds also occurs).. Functionally, cleaves peptides in various proteins in a process that requires ATP hydrolysis. Has a chymotrypsin-like activity. Plays a major role in the degradation of misfolded proteins. This is ATP-dependent Clp protease proteolytic subunit from Sphingopyxis alaskensis (strain DSM 13593 / LMG 18877 / RB2256) (Sphingomonas alaskensis).